A 315-amino-acid chain; its full sequence is O-antigen chain rhamnosyltransferase WbaN (315 aa).

It belongs to the glycosyltransferase 2 family.

The enzyme catalyses alpha-D-galactosyl-di-trans,octa-cis-undecaprenyl diphosphate + dTDP-beta-L-rhamnose = alpha-L-rhamnosyl-(1-&gt;3)-alpha-D-galactosyl-1-diphospho-di-trans,octa-cis-undecaprenol + dTDP + H(+). Its pathway is bacterial outer membrane biogenesis; LPS O-antigen biosynthesis. In terms of biological role, rhamnosyltransferase involved in the biosynthesis of the repeat unit of the lipopolysaccharide (LPS) O-antigen region. Catalyzes the addition of a rhamnose to the galactosyl-undecaprenyl diphosphate intermediate. The sequence is that of O-antigen chain rhamnosyltransferase WbaN from Salmonella anatum.